The chain runs to 1112 residues: DNA repair protein rad13 (1112 aa).

Residues 1 to 95 form an N-domain region; sequence MGVSGLWDIL…QTIQKRQARR (95 aa). Residues Asp30 and Asp77 each coordinate Mg(2+). In terms of domain architecture, UIM spans 395-414; the sequence is TDDLILQLATQQSLEENKKS. The segment at 742–870 is I-domain; that stretch reads KRSEKRDADE…LALEILHEFP (129 aa). Positions 777, 779, 798, 800, and 849 each coordinate Mg(2+). Residues 1056-1112 form a disordered region; sequence KMMASKNSSDSDSDSEDNFLASLTPKTNSSSISIENLPRKTKLSTSLLKKPSKRRRK. The span at 1079-1089 shows a compositional bias: polar residues; the sequence is TPKTNSSSISI.

It belongs to the XPG/RAD2 endonuclease family. XPG subfamily. It depends on Mg(2+) as a cofactor.

It is found in the nucleus. Single-stranded DNA endonuclease involved in excision repair of DNA damaged with UV light, bulky adducts, or cross-linking agents. Essential for the incision step of excision-repair. The protein is DNA repair protein rad13 (rad13) of Schizosaccharomyces pombe (strain 972 / ATCC 24843) (Fission yeast).